The primary structure comprises 315 residues: tRNA dimethylallyltransferase (315 aa).

14 to 21 contacts ATP; that stretch reads GATATGKS. 16-21 contacts substrate; it reads TATGKS. An interaction with substrate tRNA region spans residues 39-42; the sequence is DSRQ.

The protein belongs to the IPP transferase family. As to quaternary structure, monomer. It depends on Mg(2+) as a cofactor.

The catalysed reaction is adenosine(37) in tRNA + dimethylallyl diphosphate = N(6)-dimethylallyladenosine(37) in tRNA + diphosphate. Catalyzes the transfer of a dimethylallyl group onto the adenine at position 37 in tRNAs that read codons beginning with uridine, leading to the formation of N6-(dimethylallyl)adenosine (i(6)A). This is tRNA dimethylallyltransferase from Microcystis aeruginosa (strain NIES-843 / IAM M-2473).